A 356-amino-acid chain; its full sequence is Tyrosine recombinase XerS (356 aa).

The 106-residue stretch at 16-121 (IMPWYVLDYY…ALSSLYKYLT (106 aa)) folds into the Core-binding (CB) domain. The region spanning 169-354 (AFLDYVDKEY…VNDEQKNALD (186 aa)) is the Tyr recombinase domain. Catalysis depends on residues arginine 210, lysine 234, histidine 306, arginine 309, and histidine 332. Catalysis depends on tyrosine 341, which acts as the O-(3'-phospho-DNA)-tyrosine intermediate.

The protein belongs to the 'phage' integrase family. XerS subfamily.

Its subcellular location is the cytoplasm. FtsK is required for recombination. Its function is as follows. Site-specific tyrosine recombinase, which acts by catalyzing the cutting and rejoining of the recombining DNA molecules. Essential to convert dimers of the bacterial chromosome into monomers to permit their segregation at cell division. In Streptococcus pyogenes serotype M2 (strain MGAS10270), this protein is Tyrosine recombinase XerS.